The primary structure comprises 144 residues: Large ribosomal subunit protein uL22 (144 aa).

The disordered stretch occupies residues 1–38; the sequence is MAETQTTKKGAKRVRQPVPARRSKPNRPAKAAPGPHAS. Positions 9–27 are enriched in basic residues; it reads KGAKRVRQPVPARRSKPNR.

The protein belongs to the universal ribosomal protein uL22 family. As to quaternary structure, part of the 50S ribosomal subunit.

In terms of biological role, this protein binds specifically to 23S rRNA; its binding is stimulated by other ribosomal proteins, e.g. L4, L17, and L20. It is important during the early stages of 50S assembly. It makes multiple contacts with different domains of the 23S rRNA in the assembled 50S subunit and ribosome. Functionally, the globular domain of the protein is located near the polypeptide exit tunnel on the outside of the subunit, while an extended beta-hairpin is found that lines the wall of the exit tunnel in the center of the 70S ribosome. The protein is Large ribosomal subunit protein uL22 of Anaeromyxobacter sp. (strain Fw109-5).